The chain runs to 904 residues: NADH-quinone oxidoreductase subunit G (904 aa).

In terms of domain architecture, 2Fe-2S ferredoxin-type spans 1–83 (MATIHVDGKE…GSWISIDDEE (83 aa)). Positions 34, 45, 48, and 67 each coordinate [2Fe-2S] cluster. The 40-residue stretch at 83–122 (EAKVFRASVVEWLMTNHPHDCPVCEEGGHCHLQDMTVMTG) folds into the 4Fe-4S His(Cys)3-ligated-type domain. Residues His-99, Cys-103, Cys-106, Cys-112, Cys-151, Cys-154, Cys-157, Cys-201, Cys-228, Cys-231, Cys-235, and Cys-263 each contribute to the [4Fe-4S] cluster site. Residues 221–277 (MQFSPSICHGCSSGCNISPGERYGELRRIENRFNGSVNQYFLCDRGRFGYGYVNRKD) form the 4Fe-4S Mo/W bis-MGD-type domain.

It belongs to the complex I 75 kDa subunit family. Composed of 13 different subunits. Subunits NuoCD, E, F, and G constitute the peripheral sector of the complex. The cofactor is [2Fe-2S] cluster. [4Fe-4S] cluster serves as cofactor.

It catalyses the reaction a quinone + NADH + 5 H(+)(in) = a quinol + NAD(+) + 4 H(+)(out). NDH-1 shuttles electrons from NADH, via FMN and iron-sulfur (Fe-S) centers, to quinones in the respiratory chain. The immediate electron acceptor for the enzyme in this species is believed to be ubiquinone. Couples the redox reaction to proton translocation (for every two electrons transferred, four hydrogen ions are translocated across the cytoplasmic membrane), and thus conserves the redox energy in a proton gradient. Required for plants roots colonization. This chain is NADH-quinone oxidoreductase subunit G (nuoG), found in Pseudomonas fluorescens.